Reading from the N-terminus, the 71-residue chain is uncharacterized protein (71 aa).

Residues 23–71 (ENEKAGQSEEYDDDDKEENKKRRRNNGRRGPPEKKKSRRGGEEQTQRII) are disordered. Residues 52 to 71 (GPPEKKKSRRGGEEQTQRII) are compositionally biased toward basic and acidic residues.

This is an uncharacterized protein from Caenorhabditis elegans.